Consider the following 483-residue polypeptide: Salicylaldehyde dehydrogenase (483 aa).

NAD(+) is bound at residue G228–G233. Active-site residues include E250 and C284.

Belongs to the aldehyde dehydrogenase family.

It catalyses the reaction salicylaldehyde + NAD(+) + H2O = salicylate + NADH + 2 H(+). Its pathway is aromatic compound metabolism; naphthalene degradation. The protein is Salicylaldehyde dehydrogenase (nahF) of Pseudomonas putida (Arthrobacter siderocapsulatus).